A 253-amino-acid chain; its full sequence is Tyrosine recombinase XerD-like (253 aa).

The region spanning 8-81 is the Core-binding (CB) domain; it reads KQLTTQITNF…AVNQFLLYLY (74 aa). The region spanning 93-253 is the Tyr recombinase domain; it reads SETAPLPSQQ…PVTLEKYYKT (161 aa). Catalysis depends on residues Lys157 and Arg218. Catalysis depends on Tyr250, which acts as the O-(3'-phospho-DNA)-tyrosine intermediate.

The protein belongs to the 'phage' integrase family. XerD-like subfamily.

It is found in the cytoplasm. Its function is as follows. Putative tyrosine recombinase. Not involved in the cutting and rejoining of the recombining DNA molecules on dif(SL) site. The chain is Tyrosine recombinase XerD-like from Streptococcus thermophilus (strain CNRZ 1066).